Reading from the N-terminus, the 229-residue chain is 7-cyano-7-deazaguanine synthase (229 aa).

Position 14-24 (14-24 (LSGGQDSTTCL)) interacts with ATP. 4 residues coordinate Zn(2+): Cys192, Cys200, Cys203, and Cys206.

The protein belongs to the QueC family. Zn(2+) serves as cofactor.

It catalyses the reaction 7-carboxy-7-deazaguanine + NH4(+) + ATP = 7-cyano-7-deazaguanine + ADP + phosphate + H2O + H(+). Its pathway is purine metabolism; 7-cyano-7-deazaguanine biosynthesis. Catalyzes the ATP-dependent conversion of 7-carboxy-7-deazaguanine (CDG) to 7-cyano-7-deazaguanine (preQ(0)). In Laribacter hongkongensis (strain HLHK9), this protein is 7-cyano-7-deazaguanine synthase.